The primary structure comprises 489 residues: Cytochrome P450-DIT2 (489 aa).

A heme-binding site is contributed by cysteine 435.

The protein belongs to the cytochrome P450 family. Heme is required as a cofactor.

Functionally, involved in spore wall maturation. Thought to catalyze the oxidation of tyrosine residues in the formation of LL-dityrosine a precursor of the spore wall. In Saccharomyces cerevisiae (strain ATCC 204508 / S288c) (Baker's yeast), this protein is Cytochrome P450-DIT2 (DIT2).